We begin with the raw amino-acid sequence, 393 residues long: Short-chain dehydrogenase/reductase family 42E member 1 (393 aa).

The active-site Proton acceptor is Tyr-152. Lys-156 serves as a coordination point for NAD(+). 2 helical membrane passes run Leu-282–Gly-302 and Gly-371–Leu-391.

Belongs to the 3-beta-HSD family.

It localises to the membrane. The polypeptide is Short-chain dehydrogenase/reductase family 42E member 1 (SDR42E1) (Bos taurus (Bovine)).